A 186-amino-acid chain; its full sequence is Ribosome-recycling factor (186 aa).

Composition is skewed to basic and acidic residues over residues 134–169 (RDAN…KKAE) and 176–186 (AKAREAEVMED). Residues 134–186 (RDANKAAETAEKDKEMTEDDRDKTKDQVQELTKKAETNVNESAKAREAEVMED) are disordered.

It belongs to the RRF family.

Its subcellular location is the cytoplasm. Its function is as follows. Responsible for the release of ribosomes from messenger RNA at the termination of protein biosynthesis. May increase the efficiency of translation by recycling ribosomes from one round of translation to another. The sequence is that of Ribosome-recycling factor from Rhodopirellula baltica (strain DSM 10527 / NCIMB 13988 / SH1).